A 258-amino-acid chain; its full sequence is Deoxyribose-phosphate aldolase (258 aa).

D102 functions as the Proton donor/acceptor in the catalytic mechanism. K165 acts as the Schiff-base intermediate with acetaldehyde in catalysis. K199 acts as the Proton donor/acceptor in catalysis.

Belongs to the DeoC/FbaB aldolase family. DeoC type 2 subfamily.

It is found in the cytoplasm. It catalyses the reaction 2-deoxy-D-ribose 5-phosphate = D-glyceraldehyde 3-phosphate + acetaldehyde. It functions in the pathway carbohydrate degradation; 2-deoxy-D-ribose 1-phosphate degradation; D-glyceraldehyde 3-phosphate and acetaldehyde from 2-deoxy-alpha-D-ribose 1-phosphate: step 2/2. In terms of biological role, catalyzes a reversible aldol reaction between acetaldehyde and D-glyceraldehyde 3-phosphate to generate 2-deoxy-D-ribose 5-phosphate. The sequence is that of Deoxyribose-phosphate aldolase from Aliivibrio fischeri (strain MJ11) (Vibrio fischeri).